Here is a 609-residue protein sequence, read N- to C-terminus: Phosphomethylpyrimidine synthase (609 aa).

Residues asparagine 219, methionine 248, tyrosine 277, histidine 313, serine 333–glycine 335, aspartate 374–arginine 377, and glutamate 413 each bind substrate. Histidine 417 provides a ligand contact to Zn(2+). Tyrosine 440 contacts substrate. Histidine 481 is a binding site for Zn(2+). [4Fe-4S] cluster contacts are provided by cysteine 561, cysteine 564, and cysteine 569.

It belongs to the ThiC family. The cofactor is [4Fe-4S] cluster.

The enzyme catalyses 5-amino-1-(5-phospho-beta-D-ribosyl)imidazole + S-adenosyl-L-methionine = 4-amino-2-methyl-5-(phosphooxymethyl)pyrimidine + CO + 5'-deoxyadenosine + formate + L-methionine + 3 H(+). It participates in cofactor biosynthesis; thiamine diphosphate biosynthesis. Its function is as follows. Catalyzes the synthesis of the hydroxymethylpyrimidine phosphate (HMP-P) moiety of thiamine from aminoimidazole ribotide (AIR) in a radical S-adenosyl-L-methionine (SAM)-dependent reaction. The chain is Phosphomethylpyrimidine synthase from Deinococcus geothermalis (strain DSM 11300 / CIP 105573 / AG-3a).